Consider the following 269-residue polypeptide: Novel plant SNARE 13 (269 aa).

The Cytoplasmic portion of the chain corresponds to 1–217 (MASNLPMSPQ…IGRQVATDKC (217 aa)). Residues 33 to 94 (DKIKDSTRQS…KQSMIKELNS (62 aa)) are a coiled coil. A Phosphoserine modification is found at Ser74. One can recognise a t-SNARE coiled-coil homology domain in the interval 146-208 (MKRMDETDQA…KKASQLVKEI (63 aa)). The chain crosses the membrane as a helical; Anchor for type IV membrane protein span at residues 218-238 (IMGFLFLIVCGVVAIIIVKIV). At 239-269 (NPNNKDIRDIPGLAPPAQSRKLLYLRNQDYM) the chain is on the vesicular side.

Belongs to the novel plant SNARE family.

It is found in the membrane. Vesicle trafficking protein that functions in the secretory pathway. The sequence is that of Novel plant SNARE 13 (NPSN13) from Arabidopsis thaliana (Mouse-ear cress).